The following is a 273-amino-acid chain: Phosphate import ATP-binding protein PstB (273 aa).

Residues 26 to 268 (MRGEKVCVFY…PTEKRTQDYI (243 aa)) enclose the ABC transporter domain. 58–65 (GPSGCGKS) lines the ATP pocket.

The protein belongs to the ABC transporter superfamily. Phosphate importer (TC 3.A.1.7) family. In terms of assembly, the complex is composed of two ATP-binding proteins (PstB), two transmembrane proteins (PstC and PstA) and a solute-binding protein (PstS).

It is found in the cell inner membrane. The enzyme catalyses phosphate(out) + ATP + H2O = ADP + 2 phosphate(in) + H(+). Part of the ABC transporter complex PstSACB involved in phosphate import. Responsible for energy coupling to the transport system. The protein is Phosphate import ATP-binding protein PstB of Brucella abortus (strain 2308).